The sequence spans 305 residues: Ribosomal large subunit pseudouridine synthase C (305 aa).

The 60-residue stretch at 11-70 folds into the S4 RNA-binding domain; sequence SRLDKYLKRLYPLLTQGVIEKALRQKQITVNSQKAEASLRVKGGDKIFINDKFNLPVKQP. The active site involves Asp140.

The protein belongs to the pseudouridine synthase RluA family.

It carries out the reaction uridine(955/2504/2580) in 23S rRNA = pseudouridine(955/2504/2580) in 23S rRNA. Responsible for synthesis of pseudouridine from uracil at positions 955, 2504 and 2580 in 23S ribosomal RNA. In Rickettsia felis (strain ATCC VR-1525 / URRWXCal2) (Rickettsia azadi), this protein is Ribosomal large subunit pseudouridine synthase C (rluC).